We begin with the raw amino-acid sequence, 239 residues long: RBPJ-interacting and tubulin-associated protein 1 (239 aa).

The Nuclear export signal motif lies at 12–24 (LDLSITGHSTALP). 2 disordered regions span residues 62-97 (APPS…TPRK) and 149-239 (LVQQ…PPWK). The Nuclear localization signal signature appears at 93 to 109 (GTPRKKIQYRVKSRTPS). The segment at 129-158 (WVKKEDTVKIRPLLWSPSPRLVQQSSMQNA) is interaction with RBPJ/RBPSUH. 2 stretches are compositionally biased toward polar residues: residues 149–159 (LVQQSSMQNAK) and 203–221 (RQRQ…SCSG). Residues 158 to 239 (AKQGPLRAVH…VKMQERPPWK (82 aa)) form an interaction with tubulin region.

Belongs to the RITA family. As to quaternary structure, interacts with rbpj/rbpsuh.

The protein resides in the cytoplasm. The protein localises to the nucleus. In terms of biological role, tubulin-binding protein that acts as a negative regulator of Notch signaling pathway. Shuttles between the cytoplasm and the nucleus and mediates the nuclear export of rbpj/rbpsuh, thereby preventing the interaction between rbpj/rbpsuh and NICD product of Notch proteins (Notch intracellular domain), leading to down-regulate Notch-mediated transcription. May play a role in neurogenesis. The chain is RBPJ-interacting and tubulin-associated protein 1 (rita1) from Xenopus laevis (African clawed frog).